A 321-amino-acid polypeptide reads, in one-letter code: Tet-like dioxygenase 1 (321 aa).

The Fe2OG dioxygenase domain maps to 198–298 (DSYYALNNCL…RIGLVYFAHK (101 aa)). Residues N214 and R224 each coordinate 2-oxoglutarate. 2 residues coordinate Fe cation: H229 and D231. Y242 provides a ligand contact to 2-oxoglutarate. H279 provides a ligand contact to Fe cation. Position 289 (R289) interacts with 2-oxoglutarate. Residue Q310 participates in substrate binding.

Requires Fe(2+) as cofactor.

It carries out the reaction a 5-methyl-2'-deoxycytidine in DNA + 2-oxoglutarate + O2 = a 5-hydroxymethyl-2'-deoxycytidine in DNA + succinate + CO2. The catalysed reaction is a 5-hydroxymethyl-2'-deoxycytidine in DNA + 2-oxoglutarate + O2 = a 5-formyl-2'-deoxycytidine in DNA + succinate + CO2 + H2O. The enzyme catalyses a 5-formyl-2'-deoxycytidine in DNA + 2-oxoglutarate + O2 = a 5-carboxyl-2'-deoxycytidine in DNA + succinate + CO2 + H(+). Functionally, dioxygenase that catalyzes the conversion of the modified genomic base 5-methylcytosine (5mC) into 5-hydroxymethylcytosine (5hmC), and thereby plays a role in active DNA demethylation. Also mediates subsequent conversion of 5hmC into 5-formylcytosine (5fC), and conversion of 5fC to 5-carboxylcytosine (5caC). This is Tet-like dioxygenase 1 from Naegleria gruberi (Amoeba).